A 160-amino-acid polypeptide reads, in one-letter code: MLTGVENSESGVIDLIKPGLDDVMKNETVQVTLVNSVLGWCKAHIVDPIKTSKIVQSRAFQITMVVLGVILLIAGLALTFVLQGQLGKNAFLFLIPAVIGLVKLLTTSVFMEKPCTPEKWRLCKRLLATTEDILDDGQINQSNTIFTTESSDVTNTATQS.

Helical transmembrane passes span 62-82 and 91-111; these read ITMVVLGVILLIAGLALTFVL and FLFLIPAVIGLVKLLTTSVFM.

It is found in the membrane. The sequence is that of Sulfur-rich protein (srp) from Chlamydia caviae (strain ATCC VR-813 / DSM 19441 / 03DC25 / GPIC) (Chlamydophila caviae).